A 271-amino-acid chain; its full sequence is Tritrans,polycis-undecaprenyl-diphosphate synthase (geranylgeranyl-diphosphate specific) (271 aa).

Residue aspartate 50 is part of the active site. Mg(2+) is bound at residue aspartate 50. Substrate-binding positions include 51–54, phenylalanine 55, histidine 67, and 95–97; these read GNRR and STE. The active-site Proton acceptor is the asparagine 98. Residues arginine 101, arginine 220, and 226–228 each bind substrate; that span reads RLS. Mg(2+) is bound at residue glutamate 239.

It belongs to the UPP synthase family. As to quaternary structure, homodimer. Mg(2+) serves as cofactor.

It catalyses the reaction geranylgeranyl diphosphate + 7 isopentenyl diphosphate = tri-trans,hepta-cis-undecaprenyl diphosphate + 7 diphosphate. In terms of biological role, catalyzes the sequential condensation of isopentenyl diphosphate (IPP) with geranylgeranyl diphosphate (GGPP) to yield (2Z,6Z,10Z,14Z,18Z,22Z,26Z,30E,34E,38E)-undecaprenyl diphosphate (tritrans,heptacis-UPP). It is probably the precursor of glycosyl carrier lipids. The sequence is that of Tritrans,polycis-undecaprenyl-diphosphate synthase (geranylgeranyl-diphosphate specific) from Methanopyrus kandleri (strain AV19 / DSM 6324 / JCM 9639 / NBRC 100938).